The primary structure comprises 113 residues: Putative glycerol transporter Lin0367 (113 aa).

4 helical membrane-spanning segments follow: residues 3-23 (IGIA…IRMM), 30-50 (EWGA…VWTI), 63-83 (GTVW…ASLL), and 92-112 (VVNL…LSLF).

Its subcellular location is the membrane. Functionally, could be involved in the glycerol uptake either via facilitated diffusion or active transport. The polypeptide is Putative glycerol transporter Lin0367 (Listeria innocua serovar 6a (strain ATCC BAA-680 / CLIP 11262)).